The chain runs to 234 residues: Orotidine 5'-phosphate decarboxylase (234 aa).

Substrate contacts are provided by residues Asp10, Lys31, 58–67 (DLKLHDIPNT), Thr121, Arg183, Gln192, Gly212, and Arg213. Residue Lys60 is the Proton donor of the active site.

It belongs to the OMP decarboxylase family. Type 1 subfamily. As to quaternary structure, homodimer.

The enzyme catalyses orotidine 5'-phosphate + H(+) = UMP + CO2. The protein operates within pyrimidine metabolism; UMP biosynthesis via de novo pathway; UMP from orotate: step 2/2. In terms of biological role, catalyzes the decarboxylation of orotidine 5'-monophosphate (OMP) to uridine 5'-monophosphate (UMP). This chain is Orotidine 5'-phosphate decarboxylase, found in Halalkalibacterium halodurans (strain ATCC BAA-125 / DSM 18197 / FERM 7344 / JCM 9153 / C-125) (Bacillus halodurans).